A 506-amino-acid polypeptide reads, in one-letter code: Ribose import ATP-binding protein RbsA 2 (506 aa).

ABC transporter domains follow at residues 7-242 (LEMR…VGRP) and 250-497 (ERDI…TGVN). Residue 39–46 (GENGAGKS) coordinates ATP.

It belongs to the ABC transporter superfamily. Ribose importer (TC 3.A.1.2.1) family. In terms of assembly, the complex is composed of an ATP-binding protein (RbsA), two transmembrane proteins (RbsC) and a solute-binding protein (RbsB).

The protein resides in the cell inner membrane. It carries out the reaction D-ribose(out) + ATP + H2O = D-ribose(in) + ADP + phosphate + H(+). Part of the ABC transporter complex RbsABC involved in ribose import. Responsible for energy coupling to the transport system. This is Ribose import ATP-binding protein RbsA 2 from Escherichia coli O157:H7.